The sequence spans 624 residues: Protein FAM234B (624 aa).

The segment at 1–91 (MATVLSRALK…GFPSEPLGGL (91 aa)) is disordered. Position 16 is a phosphoserine (Ser16). Thr26 carries the post-translational modification Phosphothreonine. Ser30, Ser33, and Ser63 each carry phosphoserine. A helical transmembrane segment spans residues 107 to 127 (VFLLTLVISMVLVLLCAFLIP).

It belongs to the FAM234 family.

The protein resides in the membrane. The protein localises to the golgi outpost. It localises to the cytoplasm. Its subcellular location is the cytoskeleton. It is found in the microtubule organizing center. In Mus musculus (Mouse), this protein is Protein FAM234B.